The primary structure comprises 155 residues: Sweet protein mabinlin-2 (155 aa).

Positions 1–20 are cleaved as a signal peptide; it reads MAKLIFLFATLALFVLLANA. Positions 21 to 35 are excised as a propeptide; that stretch reads SIQTTVIEVDEEEDN. At Q36 the chain carries Pyrrolidone carboxylic acid. 4 cysteine pairs are disulfide-bonded: C40–C103, C53–C92, C93–C141, and C105–C149. The interval 64–86 is disordered; it reads GGQPDELEDEVEDDNDDENQPRR. Residues 68 to 81 show a composition bias toward acidic residues; it reads DELEDEVEDDNDDE. A propeptide spanning residues 69–82 is cleaved from the precursor; it reads ELEDEVEDDNDDEN. Position 83 is a pyrrolidone carboxylic acid (Q83). Residue P155 is a propeptide.

It belongs to the 2S seed storage albumins family. As to quaternary structure, heterodimer of a small A and a large B chain linked by disulfide bonds.

Heat stable 2S seed storage protein having sweetness-inducing activity. This chain is Sweet protein mabinlin-2, found in Capparis masaikai (Mabinlang).